A 513-amino-acid polypeptide reads, in one-letter code: Na(+)/H(+) antiporter NhaB (513 aa).

The next 11 membrane-spanning stretches (helical) occupy residues 21 to 41 (LCIITFLVINPLIYFFVSPFI), 43 to 63 (GWTLVAEFIFTLSMALKCYPL), 88 to 108 (IIANFEVILLLMFMVAGIYFM), 137 to 157 (AAFLSAFLDALTVIAVIISVG), 202 to 222 (LLMHAAVGSALGGVMTMVGEP), 235 to 255 (FIEFLIRVAPVSLPVLICGIA), 299 to 318 (MAIQALAGIWLIVGLALHLA), 322 to 344 (IIGLTIIIICTAFCGITDEHAIG), 350 to 370 (PMPFTALIVVFFTIVAVIVDL), 389 to 409 (LALFYVFNGLLSMISDNVFVG), and 477 to 497 (MALPYTIVLSIVGFFALEYLL).

It belongs to the NhaB Na(+)/H(+) (TC 2.A.34) antiporter family.

The protein localises to the cell inner membrane. It catalyses the reaction 2 Na(+)(in) + 3 H(+)(out) = 2 Na(+)(out) + 3 H(+)(in). Functionally, na(+)/H(+) antiporter that extrudes sodium in exchange for external protons. The chain is Na(+)/H(+) antiporter NhaB from Haemophilus ducreyi (strain 35000HP / ATCC 700724).